The sequence spans 692 residues: ATP-dependent DNA helicase DinG (692 aa).

One can recognise a Helicase ATP-binding domain in the interval 16–293 (NLGNQLDNFI…AELAEYKKAA (278 aa)). Residue 56-63 (AGTGIGKS) participates in ATP binding. Cys-123 contacts [4Fe-4S] cluster. Positions 134-137 (NNDQ) match the DEAH box motif. Positions 192 and 202 each coordinate [4Fe-4S] cluster. The DEAH box motif lies at 247 to 250 (DEAH). In terms of domain architecture, Helicase C-terminal spans 514 to 692 (LIKTLPEYLE…PPFKRVIEYS (179 aa)).

Belongs to the helicase family. DinG subfamily. Type 1 sub-subfamily. The cofactor is [4Fe-4S] cluster.

The catalysed reaction is Couples ATP hydrolysis with the unwinding of duplex DNA at the replication fork by translocating in the 5'-3' direction. This creates two antiparallel DNA single strands (ssDNA). The leading ssDNA polymer is the template for DNA polymerase III holoenzyme which synthesizes a continuous strand.. It carries out the reaction ATP + H2O = ADP + phosphate + H(+). In terms of biological role, DNA-dependent ATPase and 5'-3' DNA helicase. Unwinds D-loops, R-loops, forked DNA and G-quadruplex DNA. The chain is ATP-dependent DNA helicase DinG from Photobacterium profundum (strain SS9).